Consider the following 698-residue polypeptide: Elongation factor G 1 (698 aa).

The tr-type G domain maps to 8–290 (ERYRNIGIVA…AVVDYLPAPI (283 aa)). Residues 17–24 (AHVDAGKT), 88–92 (DTPGH), and 142–145 (NKMD) each bind GTP.

The protein belongs to the TRAFAC class translation factor GTPase superfamily. Classic translation factor GTPase family. EF-G/EF-2 subfamily.

It is found in the cytoplasm. Catalyzes the GTP-dependent ribosomal translocation step during translation elongation. During this step, the ribosome changes from the pre-translocational (PRE) to the post-translocational (POST) state as the newly formed A-site-bound peptidyl-tRNA and P-site-bound deacylated tRNA move to the P and E sites, respectively. Catalyzes the coordinated movement of the two tRNA molecules, the mRNA and conformational changes in the ribosome. The chain is Elongation factor G 1 from Shewanella denitrificans (strain OS217 / ATCC BAA-1090 / DSM 15013).